The primary structure comprises 266 residues: Apolipoprotein A-I (266 aa).

Positions 1–18 (MKAVVLTLAVLFLTGSQA) are cleaved as a signal peptide. Repeat copies occupy residues 67-88 (LKLL…EQIG) and 89-110 (PVTQ…QEMS). Residues 67-266 (LKLLDNWDTL…DEATKKLNAQ (200 aa)) are 10 X approximate tandem repeats. Position 109 is a methionine sulfoxide (Met109). Residues 111–121 (KDLEEVKQKVQ) form a 3; half-length repeat. 5 repeat units span residues 122-143 (PYLD…QKVA), 144-165 (PLGT…EKLS), 166-187 (PLGE…AQLA), 188-209 (PYSD…ESGG), and 210-231 (ASLA…EKAK). The 9; half-length repeat unit spans residues 232 to 242 (PALEDLRQGLL). Copy 10 of the repeat occupies 243–266 (PVLESFKVGLMAIVDEATKKLNAQ).

The protein belongs to the apolipoprotein A1/A4/E family. Homodimer. Interacts with APOA1BP and CLU. Component of a sperm activating protein complex (SPAP), consisting of APOA1, an immunoglobulin heavy chain, an immunoglobulin light chain and albumin. Interacts with NDRG1. Interacts with SCGB3A2. Interacts with NAXE and YJEFN3. Post-translationally, glycosylated. Palmitoylated. In terms of processing, phosphorylation sites are present in the extracellular medium.

It is found in the secreted. In terms of biological role, participates in the reverse transport of cholesterol from tissues to the liver for excretion by promoting cholesterol efflux from tissues and by acting as a cofactor for the lecithin cholesterol acyltransferase (LCAT). As part of the SPAP complex, activates spermatozoa motility. This chain is Apolipoprotein A-I (APOA1), found in Acinonyx jubatus (Cheetah).